The following is a 543-amino-acid chain: Chaperonin GroEL (543 aa).

ATP is bound by residues 29–32 (TLGP), 86–90 (DGTTT), glycine 413, 478–480 (DAL), and aspartate 494. The tract at residues 524 to 543 (PEPEAPAVPAGMPGGMGGMY) is disordered.

Belongs to the chaperonin (HSP60) family. As to quaternary structure, forms a cylinder of 14 subunits composed of two heptameric rings stacked back-to-back. Interacts with the co-chaperonin GroES.

The protein resides in the cytoplasm. It carries out the reaction ATP + H2O + a folded polypeptide = ADP + phosphate + an unfolded polypeptide.. Together with its co-chaperonin GroES, plays an essential role in assisting protein folding. The GroEL-GroES system forms a nano-cage that allows encapsulation of the non-native substrate proteins and provides a physical environment optimized to promote and accelerate protein folding. In Ruminiclostridium cellulolyticum (strain ATCC 35319 / DSM 5812 / JCM 6584 / H10) (Clostridium cellulolyticum), this protein is Chaperonin GroEL.